A 374-amino-acid chain; its full sequence is Chorismate synthase (374 aa).

An NADP(+)-binding site is contributed by Arg-55. FMN is bound by residues 132–134, Gly-293, 308–312, and Arg-335; these read RGS and KPTPS.

It belongs to the chorismate synthase family. The cofactor is FMNH2.

It carries out the reaction 5-O-(1-carboxyvinyl)-3-phosphoshikimate = chorismate + phosphate. The protein operates within metabolic intermediate biosynthesis; chorismate biosynthesis; chorismate from D-erythrose 4-phosphate and phosphoenolpyruvate: step 7/7. Its function is as follows. Catalyzes the anti-1,4-elimination of the C-3 phosphate and the C-6 proR hydrogen from 5-enolpyruvylshikimate-3-phosphate (EPSP) to yield chorismate, which is the branch point compound that serves as the starting substrate for the three terminal pathways of aromatic amino acid biosynthesis. This reaction introduces a second double bond into the aromatic ring system. The sequence is that of Chorismate synthase from Methanothermobacter thermautotrophicus (strain ATCC 29096 / DSM 1053 / JCM 10044 / NBRC 100330 / Delta H) (Methanobacterium thermoautotrophicum).